Reading from the N-terminus, the 228-residue chain is Urease subunit gamma/beta (228 aa).

Residues 1–101 (MQLTERERDK…LVTVHDPIRG (101 aa)) are urease gamma. A urease beta region spans residues 102–228 (AASRRVAGEY…ARAAGFGGAQ (127 aa)).

It in the N-terminal section; belongs to the urease gamma subunit family. The protein in the C-terminal section; belongs to the urease beta subunit family. In terms of assembly, heterohexamer of 3 UreC (alpha) and 3 UreAB (gamma/beta) subunits.

The protein localises to the cytoplasm. The enzyme catalyses urea + 2 H2O + H(+) = hydrogencarbonate + 2 NH4(+). The protein operates within nitrogen metabolism; urea degradation; CO(2) and NH(3) from urea (urease route): step 1/1. The chain is Urease subunit gamma/beta from Deinococcus radiodurans (strain ATCC 13939 / DSM 20539 / JCM 16871 / CCUG 27074 / LMG 4051 / NBRC 15346 / NCIMB 9279 / VKM B-1422 / R1).